The sequence spans 98 residues: UPF0213 protein in ldhD 5'region (98 aa).

One can recognise a GIY-YIG domain in the interval 7–84 (NGFYFYVLWC…KKQSRKEKLK (78 aa)).

The protein belongs to the UPF0213 family.

The protein is UPF0213 protein in ldhD 5'region of Pediococcus acidilactici.